The primary structure comprises 185 residues: NAD(P)H-dependent FMN reductase PA1204 (185 aa).

Residues 13–20 (SLRSGSYN) and 81–83 (YNY) contribute to the FMN site. 115–122 (SAGRFGTA) contributes to the NAD(+) binding site.

The protein belongs to the SsuE family. In terms of assembly, homodimer. Requires FMN as cofactor.

Functionally, has NAD(P)H-dependent FMN reductase activity. The polypeptide is NAD(P)H-dependent FMN reductase PA1204 (Pseudomonas aeruginosa (strain ATCC 15692 / DSM 22644 / CIP 104116 / JCM 14847 / LMG 12228 / 1C / PRS 101 / PAO1)).